Here is a 125-residue protein sequence, read N- to C-terminus: Glycine cleavage system H protein (125 aa).

A Lipoyl-binding domain is found at 19–101; sequence GAVVGITDFA…NGSGWFFKLT (83 aa). Lys-60 is modified (N6-lipoyllysine).

It belongs to the GcvH family. In terms of assembly, the glycine cleavage system is composed of four proteins: P, T, L and H. The cofactor is (R)-lipoate.

The glycine cleavage system catalyzes the degradation of glycine. The H protein shuttles the methylamine group of glycine from the P protein to the T protein. The protein is Glycine cleavage system H protein of Methylocella silvestris (strain DSM 15510 / CIP 108128 / LMG 27833 / NCIMB 13906 / BL2).